We begin with the raw amino-acid sequence, 1452 residues long: Receptor-type tyrosine-protein phosphatase mu (1452 aa).

An N-terminal signal peptide occupies residues 1–20 (MRGLGTCLATLAGLLLTAAG). The Extracellular portion of the chain corresponds to 21–742 (ETFSGGCLFD…PEKQTDHTVK (722 aa)). The region spanning 22 to 184 (TFSGGCLFDE…VKVLGHPCTR (163 aa)) is the MAM domain. A disulfide bond links Cys-27 and Cys-36. N-linked (GlcNAc...) asparagine glycans are attached at residues Asn-72, Asn-92, Asn-131, and Asn-249. 2 cysteine pairs are disulfide-bonded: Cys-96-Cys-182 and Cys-206-Cys-260. Residues 186-277 (PHFLRIQNVE…VGISNYAELV (92 aa)) enclose the Ig-like C2-type domain. 4 consecutive Fibronectin type-III domains span residues 284–379 (PIAP…CADP), 382–480 (GPRK…TDED), 482–587 (PGAV…SAPS), and 589–671 (PAYE…DSLQ). N-linked (GlcNAc...) asparagine glycosylation is found at Asn-406, Asn-414, Asn-454, Asn-534, Asn-544, Asn-598, Asn-651, and Asn-681. The chain crosses the membrane as a helical span at residues 743-764 (IAGVIAGILLFVIIFLGVVLVM). The Cytoplasmic portion of the chain corresponds to 765–1452 (KKRKLAKKRK…EVALEYLNSG (688 aa)). Ser-821 carries the post-translational modification Phosphoserine. Tyrosine-protein phosphatase domains are found at residues 900–1154 (FKEE…ILEA) and 1186–1448 (IKEE…ALEY). Substrate is bound by residues Asp-1063, 1095 to 1101 (CSAGAGR), and Gln-1139. Cys-1095 (phosphocysteine intermediate) is an active-site residue. Catalysis depends on Cys-1389, which acts as the Phosphocysteine intermediate.

This sequence belongs to the protein-tyrosine phosphatase family. Receptor class 2B subfamily. As to quaternary structure, homodimer.

It is found in the cell membrane. It carries out the reaction O-phospho-L-tyrosyl-[protein] + H2O = L-tyrosyl-[protein] + phosphate. Functionally, receptor protein-tyrosine phosphatase that mediates homotypic cell-cell interactions and plays a role in adipogenic differentiation via modulation of p120 catenin/CTNND1 phosphorylation. Promotes CTNND1 dephosphorylation and prevents its cytoplasmic localization where it inhibits SLC2A4 membrane trafficking. In turn, SLC2A4 is directed to the plasma membrane and performs its glucose transporter function. This chain is Receptor-type tyrosine-protein phosphatase mu (PTPRM), found in Homo sapiens (Human).